A 60-amino-acid chain; its full sequence is Rubredoxin 4 (60 aa).

Residues 4–55 enclose the Rubredoxin-like domain; it reads YKLYQCAQCGFEYDEAVGWPEDGIEPGTRWDDIPEDWSCPDCGAAKSDFFMV. Cysteine 9, cysteine 12, cysteine 42, and cysteine 45 together coordinate Fe cation.

Belongs to the rubredoxin family. Fe(3+) is required as a cofactor.

Involved in the hydrocarbon hydroxylating system, which transfers electrons from NADH to rubredoxin reductase and then through rubredoxin to alkane 1 monooxygenase. This chain is Rubredoxin 4 (rubA4), found in Rhodococcus sp. (strain Q15).